The following is a 315-amino-acid chain: ATP synthase gamma chain (315 aa).

It belongs to the ATPase gamma chain family. In terms of assembly, F-type ATPases have 2 components, CF(1) - the catalytic core - and CF(0) - the membrane proton channel. CF(1) has five subunits: alpha(3), beta(3), gamma(1), delta(1), epsilon(1). CF(0) has three main subunits: a, b and c.

Its subcellular location is the cellular thylakoid membrane. Its function is as follows. Produces ATP from ADP in the presence of a proton gradient across the membrane. The gamma chain is believed to be important in regulating ATPase activity and the flow of protons through the CF(0) complex. The sequence is that of ATP synthase gamma chain from Nostoc sp. (strain PCC 7120 / SAG 25.82 / UTEX 2576).